The following is a 493-amino-acid chain: MTDLTSLTIAEAREKLKAKDFSALELTDAYLSAIDAANGALNAYVALTPEKARDMAKASDERIASGSAGELEGVPLGVKDLFATRDVHTQACSHVLDGFKPKYESTVTQNLWDQGAVMLGKLNMDEFAMGSSNESSWYGPVINPWRANGSEQKLVPGGSSGGSAAAVAAHLCAGATATDTGGSIRQPAAFTGTVGIKPTYGRCSRFGIVAYASSLDQAGPIARDVRDAAILLKTMASVDAKDTTSVDLPVPDYEKAIGQSLKGLKIGIPREYRVDGMPEEIEKLWAKGVEWLRDAGAEVVDISLPHTKYALPAYYIVAPAEASSNLARYDGVRYGLRVDGKDIADMYEKSRAAGFGKEVQRRIMVGTYVLSAGYYDAYYLKAQKVRTLIKRDFENVFHEGVDAILAPITPSSAFAVGDEELASDPVKMYLQDVFTITVNMAGLPGLSVPAGLDGKGLPLGLQLIGKPFEEETLFKTAHAIEQAAGKFTPAKWW.

Residues Lys79 and Ser159 each act as charge relay system in the active site. The active-site Acyl-ester intermediate is the Ser183.

Belongs to the amidase family. GatA subfamily. As to quaternary structure, heterotrimer of A, B and C subunits.

The enzyme catalyses L-glutamyl-tRNA(Gln) + L-glutamine + ATP + H2O = L-glutaminyl-tRNA(Gln) + L-glutamate + ADP + phosphate + H(+). Functionally, allows the formation of correctly charged Gln-tRNA(Gln) through the transamidation of misacylated Glu-tRNA(Gln) in organisms which lack glutaminyl-tRNA synthetase. The reaction takes place in the presence of glutamine and ATP through an activated gamma-phospho-Glu-tRNA(Gln). The sequence is that of Glutamyl-tRNA(Gln) amidotransferase subunit A from Agrobacterium fabrum (strain C58 / ATCC 33970) (Agrobacterium tumefaciens (strain C58)).